The sequence spans 558 residues: Arginine--tRNA ligase (558 aa).

Positions 119 to 129 (ANPDGPLHVGH) match the 'HIGH' region motif.

It belongs to the class-I aminoacyl-tRNA synthetase family.

It localises to the cytoplasm. It carries out the reaction tRNA(Arg) + L-arginine + ATP = L-arginyl-tRNA(Arg) + AMP + diphosphate. This is Arginine--tRNA ligase from Methanothrix thermoacetophila (strain DSM 6194 / JCM 14653 / NBRC 101360 / PT) (Methanosaeta thermophila).